Reading from the N-terminus, the 151-residue chain is UPF0178 protein Sde_3033 (151 aa).

This sequence belongs to the UPF0178 family.

The sequence is that of UPF0178 protein Sde_3033 from Saccharophagus degradans (strain 2-40 / ATCC 43961 / DSM 17024).